We begin with the raw amino-acid sequence, 632 residues long: MAU2 chromatid cohesion factor homolog (632 aa).

TPR repeat units lie at residues 453–486 (GGFY…ANAE) and 493–526 (SCSL…ASKI).

This sequence belongs to the SCC4/mau-2 family. In terms of assembly, interacts with Nipped-B to form the cohesin loading complex.

It is found in the nucleus. The protein resides in the nucleoplasm. Its function is as follows. Required for association of the cohesin complex with chromatin during interphase. Plays a role in sister chromatid cohesion and normal progression through prometaphase. This is MAU2 chromatid cohesion factor homolog from Drosophila sechellia (Fruit fly).